Consider the following 278-residue polypeptide: Polyamine aminopropyltransferase (278 aa).

One can recognise a PABS domain in the interval Glu5–Lys238. Residue Gln34 coordinates S-methyl-5'-thioadenosine. Residues His65 and Asp89 each coordinate spermidine. Residues Glu109 and Asp140–Gly141 contribute to the S-methyl-5'-thioadenosine site. Asp158 functions as the Proton acceptor in the catalytic mechanism. Asp158–Asp161 contributes to the spermidine binding site. Pro165 contacts S-methyl-5'-thioadenosine.

Belongs to the spermidine/spermine synthase family. In terms of assembly, homodimer or homotetramer.

The protein resides in the cytoplasm. The catalysed reaction is S-adenosyl 3-(methylsulfanyl)propylamine + putrescine = S-methyl-5'-thioadenosine + spermidine + H(+). It functions in the pathway amine and polyamine biosynthesis; spermidine biosynthesis; spermidine from putrescine: step 1/1. Catalyzes the irreversible transfer of a propylamine group from the amino donor S-adenosylmethioninamine (decarboxy-AdoMet) to putrescine (1,4-diaminobutane) to yield spermidine. The chain is Polyamine aminopropyltransferase from Caldicellulosiruptor saccharolyticus (strain ATCC 43494 / DSM 8903 / Tp8T 6331).